The chain runs to 440 residues: 5-methylthioadenosine/S-adenosylhomocysteine deaminase (440 aa).

Residues His-70 and His-72 each contribute to the Zn(2+) site. Glu-99 and His-191 together coordinate substrate. His-218 contributes to the Zn(2+) binding site. Residues Glu-221 and Asp-306 each coordinate substrate. Zn(2+) is bound at residue Asp-306.

It belongs to the metallo-dependent hydrolases superfamily. MTA/SAH deaminase family. Zn(2+) serves as cofactor.

The catalysed reaction is S-adenosyl-L-homocysteine + H2O + H(+) = S-inosyl-L-homocysteine + NH4(+). The enzyme catalyses S-methyl-5'-thioadenosine + H2O + H(+) = S-methyl-5'-thioinosine + NH4(+). Catalyzes the deamination of 5-methylthioadenosine and S-adenosyl-L-homocysteine into 5-methylthioinosine and S-inosyl-L-homocysteine, respectively. Is also able to deaminate adenosine. The polypeptide is 5-methylthioadenosine/S-adenosylhomocysteine deaminase (Nitratidesulfovibrio vulgaris (strain DSM 19637 / Miyazaki F) (Desulfovibrio vulgaris)).